The primary structure comprises 146 residues: Globin-2B (146 aa).

Residues 9 to 146 enclose the Globin domain; it reads QLTADVKKDL…KLVGVVQAAL (138 aa). H101 contacts heme b.

The protein belongs to the globin family. Homodimer.

This is Globin-2B from Anadara trapezia (Sydney cockle).